Consider the following 242-residue polypeptide: ATP synthase subunit a (242 aa).

5 helical membrane passes run 21-41 (LASV…AIVC), 83-103 (AVTL…FAIV), 118-137 (ATVT…YYGI), 175-195 (LYGN…LFFE), and 198-218 (AWGW…SIFV).

Belongs to the ATPase A chain family. F-type ATPases have 2 components, CF(1) - the catalytic core - and CF(0) - the membrane proton channel. CF(1) has five subunits: alpha(3), beta(3), gamma(1), delta(1), epsilon(1). CF(0) has three main subunits: a(1), b(2) and c(9-12). The alpha and beta chains form an alternating ring which encloses part of the gamma chain. CF(1) is attached to CF(0) by a central stalk formed by the gamma and epsilon chains, while a peripheral stalk is formed by the delta and b chains.

Its subcellular location is the cell membrane. Functionally, key component of the proton channel; it plays a direct role in the translocation of protons across the membrane. The chain is ATP synthase subunit a from Staphylococcus epidermidis (strain ATCC 35984 / DSM 28319 / BCRC 17069 / CCUG 31568 / BM 3577 / RP62A).